The primary structure comprises 578 residues: GTP diphosphokinase CRSH3, chloroplastic (578 aa).

The N-terminal 45 residues, 1-45 (MANAGVNETVAVAVAIDAPGVGHDHGAAGEVRRPSTRRLAPAGSG), are a transit peptide targeting the chloroplast. An HD domain is found at 99-199 (SVSRALVVAA…LELAVKLDAM (101 aa)). 2 EF-hand domains span residues 468–503 (ATAGNVERAFQLLDKNGDGRISMEELTEIMEDLGAG) and 506–537 (DAEELMRLLDANSDGSLSSDEFALFQKRVKLK). Ca(2+) contacts are provided by Asp-481, Asn-483, Asp-485, Arg-487, Glu-492, Asp-515, Asn-517, Asp-519, Ser-521, and Glu-526.

The protein belongs to the RelA/SpoT family. In terms of tissue distribution, expressed in roots and shoots.

The protein localises to the plastid. It is found in the chloroplast. It catalyses the reaction GTP + ATP = guanosine 3'-diphosphate 5'-triphosphate + AMP. Activated by calcium. Possesses calcium-dependent ppGpp (guanosine 3'-diphosphate 5'-diphosphate) synthetase activity in vitro and is able to functionally complement E.coli relA mutants. May be involved in a rapid plant ppGpp-mediated response to pathogens and other stresses. The sequence is that of GTP diphosphokinase CRSH3, chloroplastic from Oryza sativa subsp. japonica (Rice).